Consider the following 724-residue polypeptide: Probable protein phosphatase 2C 62 (724 aa).

The tract at residues 357-385 is disordered; the sequence is DELISTSEATRHSVDEIAQKPIIDTSEKN. Residues 365–374 show a composition bias toward basic and acidic residues; it reads ATRHSVDEIA. The PPM-type phosphatase domain occupies 482–719; that stretch reads DSGFASLQSP…DAVTVIISFV (238 aa). Positions 514, 515, 643, and 710 each coordinate Mn(2+).

It belongs to the PP2C family. Mg(2+) serves as cofactor. It depends on Mn(2+) as a cofactor.

It catalyses the reaction O-phospho-L-seryl-[protein] + H2O = L-seryl-[protein] + phosphate. The catalysed reaction is O-phospho-L-threonyl-[protein] + H2O = L-threonyl-[protein] + phosphate. The chain is Probable protein phosphatase 2C 62 from Arabidopsis thaliana (Mouse-ear cress).